Here is a 499-residue protein sequence, read N- to C-terminus: Cytochrome P450 ARB_01131 (499 aa).

Positions 1–21 are cleaved as a signal peptide; the sequence is MLSLIVACLVLPLICYKLVRS. Asparagine 23 is a glycosylation site (N-linked (GlcNAc...) asparagine). Residue cysteine 437 coordinates heme.

This sequence belongs to the cytochrome P450 family. Heme is required as a cofactor.

In terms of biological role, together with an NADPH cytochrome P450 the enzyme system catalyzes the terminal hydroxylation as the first step in the assimilation of alkanes and fatty acids. The chain is Cytochrome P450 ARB_01131 from Arthroderma benhamiae (strain ATCC MYA-4681 / CBS 112371) (Trichophyton mentagrophytes).